A 1248-amino-acid chain; its full sequence is Structural polyprotein (1248 aa).

The span at 1 to 10 shows a compositional bias: polar residues; it reads MEFIPTQTFY. A disordered region spans residues 1-104; that stretch reads MEFIPTQTFY…KKKKPGRRER (104 aa). Positions 22 to 44 are enriched in low complexity; the sequence is RPTIQVIRPRPRPQRQAGQLAQL. The host transcription inhibition stretch occupies residues 36–68; it reads RQAGQLAQLISAVNKLTMRAVPQQKPRRNRKNK. Positions 60–72 are enriched in basic residues; that stretch reads KPRRNRKNKKQKQ. The Nuclear localization signal motif lies at 61-99; sequence PRRNRKNKKQKQKQQAPQNNTNQKKQPPKKKPAQKKKKP. Positions 73–85 are enriched in low complexity; the sequence is KQQAPQNNTNQKK. Positions 84 to 114 are binding to the viral RNA; sequence KKQPPKKKPAQKKKKPGRRERMCMKIENDCI. Positions 86-101 are enriched in basic residues; it reads QPPKKKPAQKKKKPGR. Residues 99-113 form a ribosome-binding region; it reads PGRRERMCMKIENDC. Cysteines 113 and 128 form a disulfide. One can recognise a Peptidase S3 domain in the interval 113-261; sequence CIFEVKHEGK…KITPEGAEEW (149 aa). His-139 (charge relay system) is an active-site residue. The Nuclear export signal signature appears at 144–154; that stretch reads IDNADLAKLAF. The interval 155–160 is interaction with spike glycoprotein E2; that stretch reads KRSSKY. Residue Asp-161 is the Charge relay system of the active site. The interval 183–193 is dimerization of the capsid protein; the sequence is PEGYYNWHHGA. Ser-213 acts as the Charge relay system in catalysis. Residues 219–223 form a dimerization of the capsid protein region; sequence DNKGR. Positions 262-274 are functions as an uncleaved signal peptide for the precursor of protein E3/E2; sequence SLAIPVMCLLANT. Over 262 to 692 the chain is Extracellular; it reads SLAIPVMCLL…YYYELYPTMT (431 aa). Cystine bridges form between Cys-269-Cys-278, Cys-283-Cys-287, Cys-286-Cys-318, Cys-344-Cys-450, Cys-347-Cys-353, Cys-416-Cys-430, Cys-478-Cys-591, Cys-526-Cys-550, and Cys-528-Cys-545. A glycan (N-linked (GlcNAc...) asparagine; by host) is linked at Asn-273. 2 interaction with host Mxra8 receptor regions span residues 351 to 354 and 387 to 389; these read HSCH and HDW. Interaction with host Mxra8 receptor regions lie at residues 509 to 512 and 541 to 547; these read QSGN and VINNCKV. Residues Asn-588 and Asn-670 are each glycosylated (N-linked (GlcNAc...) asparagine; by host). A helical transmembrane segment spans residues 693–713; that stretch reads VVVVSVASFILLSMVGMAVGM. The Cytoplasmic portion of the chain corresponds to 714–748; the sequence is CMCARRRCITPYELTPGATVPFLLSLICCIRTAKA. The interaction with the capsid protein stretch occupies residues 716–720; sequence CARRR. S-palmitoyl cysteine; by host attachment occurs at residues Cys-721, Cys-741, and Cys-742. The transient transmembrane before p62-6K protein processing stretch occupies residues 721 to 741; sequence CITPYELTPGATVPFLLSLIC. A disulfide bond links Cys-721 and Cys-742. The Extracellular portion of the chain corresponds to 749–763; sequence ATYQEAAVYLWNEQQ. The helical transmembrane segment at 764–784 threads the bilayer; that stretch reads PLFWLQALIPLAALIVLCNCL. At 785–795 the chain is on the cytoplasmic side; that stretch reads RLLPCCCKTLA. The chain crosses the membrane as a helical span at residues 796 to 816; sequence FLAVMSIGAHTVSAYEHVTVI. Residues 817–1224 are Extracellular-facing; the sequence is PNTVGVPYKT…AMSWVQKITG (408 aa). Cystine bridges form between Cys-858/Cys-923, Cys-871/Cys-903, Cys-872/Cys-905, and Cys-877/Cys-887. An E1 fusion peptide loop region spans residues 893-910; sequence VYPFMWGGAYCFCDAENT. N-linked (GlcNAc...) asparagine; by host glycans are attached at residues Asn-950 and Asn-1079. Cystine bridges form between Cys-1068–Cys-1080, Cys-1110–Cys-1185, Cys-1115–Cys-1189, and Cys-1137–Cys-1179. The chain crosses the membrane as a helical span at residues 1225–1245; it reads GVGLVVAVAALILIVVLCVSF. Cys-1242 is lipidated: S-palmitoyl cysteine; by host. Cys-1242 is lipidated: S-stearoyl cysteine; by host. The Cytoplasmic portion of the chain corresponds to 1246–1248; the sequence is SRH.

The protein belongs to the alphavirus structural polyprotein family. In terms of assembly, homodimer. Homomultimer. Interacts with host karyopherin KPNA4; this interaction allows the nuclear import of the viral capsid protein. Interacts with spike glycoprotein E2. Interacts with host IRAK1; the interaction leads to inhibition of IRAK1-dependent signaling. The precursor of protein E3/E2 and E1 form a heterodimer shortly after synthesis. As to quaternary structure, interacts with spike glycoprotein E2. The precursor of protein E3/E2 and E1 form a heterodimer shortly after synthesis. Processing of the precursor of protein E3/E2 into E2 and E3 results in a heterodimer of the spike glycoproteins E2 and E1. Spike at virion surface are constituted of three E2-E1 heterodimers. After target cell attachment and endocytosis, E1 changes conformation to form homotrimers. Interacts with 6K protein. Interacts with host MXRA8; this interaction mediates virus entry. The interaction involves 2 adjacent E2-E1 heterodimers. In terms of assembly, interacts with spike glycoprotein E1. Processing of the precursor of protein E3/E2 into E2 and E3 results in a heterodimer of the spike glycoproteins E2 and E1. Spike at virion surface are constituted of a trimer of E2-E1 heterodimers. Interacts with 6K protein. Interacts with host MXRA8; this interaction mediates virus entry. The interaction involves 2 adjacent E2-E1 heterodimers. Oligomer. Interacts with spike glycoprotein E1. Interacts with spike glycoprotein E2. Post-translationally, specific enzymatic cleavages in vivo yield mature proteins. Capsid protein is auto-cleaved during polyprotein translation, unmasking a signal peptide at the N-terminus of the precursor of E3/E2. The remaining polyprotein is then targeted to the host endoplasmic reticulum, where host signal peptidase cleaves it into pE2, 6K and E1 proteins. pE2 is further processed to mature E3 and E2 by host furin in trans-Golgi vesicle. Palmitoylated via thioester bonds. These palmitoylations may induce disruption of the C-terminus transmembrane. This would result in the reorientation of E2 C-terminus from lumenal to cytoplasmic side. In terms of processing, N-glycosylated. Post-translationally, palmitoylated via thioester bonds.

The protein localises to the virion. The protein resides in the host cytoplasm. Its subcellular location is the host cell membrane. It localises to the host nucleus. It is found in the virion membrane. The protein localises to the host Golgi apparatus. The protein resides in the host trans-Golgi network. Its subcellular location is the host endoplasmic reticulum. The catalysed reaction is Autocatalytic release of the core protein from the N-terminus of the togavirus structural polyprotein by hydrolysis of a -Trp-|-Ser- bond.. Functionally, forms an icosahedral capsid with a T=4 symmetry composed of 240 copies of the capsid protein surrounded by a lipid membrane through which penetrate 80 spikes composed of trimers of E1-E2 heterodimers. The capsid protein binds to the viral RNA genome at a site adjacent to a ribosome binding site for viral genome translation following genome release. Possesses a protease activity that results in its autocatalytic cleavage from the nascent structural protein. Following its self-cleavage, the capsid protein transiently associates with ribosomes, and within several minutes the protein binds to viral RNA and rapidly assembles into icosahedric core particles. The resulting nucleocapsid eventually associates with the cytoplasmic domain of the spike glycoprotein E2 at the cell membrane, leading to budding and formation of mature virions. In case of infection, new virions attach to target cells and after clathrin-mediated endocytosis their membrane fuses with the host endosomal membrane. This leads to the release of the nucleocapsid into the cytoplasm, followed by an uncoating event necessary for the genomic RNA to become accessible. The uncoating might be triggered by the interaction of capsid proteins with ribosomes. Binding of ribosomes would release the genomic RNA since the same region is genomic RNA-binding and ribosome-binding. Specifically inhibits interleukin-1 receptor-associated kinase 1/IRAK1-dependent signaling during viral entry, representing a means by which the alphaviruses may evade innate immune detection and activation prior to viral gene expression. Degrades host cyclic GMP-AMP synthase (CGAS) thereby inhibiting the cGAS-STING pathway. Provides the signal sequence for the translocation of the precursor of protein E3/E2 to the host endoplasmic reticulum. Furin-cleaved E3 remains associated with spike glycoprotein E1 and mediates pH protection of the latter during the transport via the secretory pathway. After virion release from the host cell, the assembly protein E3 is gradually released in the extracellular space. In terms of biological role, plays a role in viral attachment to target host cell, by binding to the cell receptor MXRA8. Synthesized as a p62 precursor which is processed by furin at the cell membrane just before virion budding, giving rise to E2-E1 heterodimer. The p62-E1 heterodimer is stable, whereas E2-E1 is unstable and dissociate at low pH. p62 is processed at the last step, presumably to avoid E1 fusion activation before its final export to cell surface. E2 C-terminus contains a transitory transmembrane that would be disrupted by palmitoylation, resulting in reorientation of the C-terminal tail from lumenal to cytoplasmic side. This step is critical since E2 C-terminus is involved in budding by interacting with capsid proteins. This release of E2 C-terminus in cytoplasm occurs lately in protein export, and precludes premature assembly of particles at the endoplasmic reticulum membrane. Its function is as follows. Acts as a viroporin that participates in virus glycoprotein processing and transport to the plasma membrane, cell permeabilization and budding of viral particles. Disrupts the calcium homeostasis of the cell, probably at the endoplasmic reticulum level. This leads to cytoplasmic calcium elevation. Because of its lipophilic properties, the 6K protein is postulated to influence the selection of lipids that interact with the transmembrane domains of the glycoproteins, which, in turn, affects the deformability of the bilayer required for the extreme curvature that occurs as budding proceeds. Present in low amount in virions, about 3% compared to viral glycoproteins. Functionally, class II viral fusion protein. Fusion activity is inactive as long as E1 is bound to E2 in mature virion. After virus attachment to target cell and endocytosis, acidification of the endosome induce dissociation of E1/E2 heterodimer and concomitant trimerization of the E1 subunits. This E1 trimer is fusion active, and promotes release of viral nucleocapsid in cytoplasm after endosome and viral membrane fusion. Efficient fusion requires the presence of cholesterol and sphingolipid in the target membrane. The polypeptide is Structural polyprotein (Chikungunya virus (strain S27-African prototype) (CHIKV)).